We begin with the raw amino-acid sequence, 20 residues long: Tetracycline resistance leader peptide (20 aa).

The segment at 1–20 (MKCNKMNRVQLKEGSVSMTL) is disordered.

The protein is Tetracycline resistance leader peptide (tetL) of Bacillus subtilis (strain 168).